The following is a 1083-amino-acid chain: Solute carrier family 12 member 7 (1083 aa).

Residues 1–52 form a disordered region; it reads MPTNFTVVPVEAHADGGGDETAERTEAPGTPEGPEPERPSPGDGNPRENSPF. Over 1 to 119 the chain is Cytoplasmic; sequence MPTNFTVVPV…RREAKAPRMG (119 aa). A compositionally biased stretch (basic and acidic residues) spans 12–26; the sequence is AHADGGGDETAERTE. A Phosphothreonine modification is found at threonine 30. Residues serine 50 and serine 62 each carry the phosphoserine modification. A discontinuously helical transmembrane segment spans residues 120–142; that stretch reads TFIGVYLPCLQNILGVILFLRLT. K(+)-binding residues include asparagine 131 and isoleucine 132. Residue valine 135 coordinates chloride. The Extracellular portion of the chain corresponds to 143 to 149; it reads WIVGVAG. A helical transmembrane segment spans residues 150–172; that stretch reads VLESFLIVAMCCTCTMLTAISMS. The Cytoplasmic portion of the chain corresponds to 173-196; the sequence is AIATNGVVPAGGSYYMISRSLGPE. A helical membrane pass occupies residues 197–225; sequence FGGAVGLCFYLGTTFAGAMYILGTIEIFL. Over 226–249 the chain is Extracellular; the sequence is TYISPGAAIFQAEAAGGEAAAMLH. Transmembrane regions (helical) follow at residues 250-270 and 272-300; these read NMRV…FVGV and YVNK…KSAF. Residues 301–419 lie on the Extracellular side of the membrane; the sequence is DPPDIPVCLL…PYVLTDIAAS (119 aa). Intrachain disulfides connect cysteine 308/cysteine 323 and cysteine 343/cysteine 352. N-linked (GlcNAc...) asparagine glycosylation is present at asparagine 312. The N-linked (GlcNAc...) asparagine glycan is linked to asparagine 360. A helical membrane pass occupies residues 420-440; the sequence is FTLLVGIYFPSVTGIMAGSNR. K(+) is bound by residues proline 429 and threonine 432. Proline 429 contacts chloride. Chloride contacts are provided by glycine 433 and isoleucine 434. Residues 441–450 lie on the Cytoplasmic side of the membrane; sequence SGDLKDAQKS. The chain crosses the membrane as a helical span at residues 451–473; sequence IPTGTILAIVTTSFIYLSCIVLF. The Extracellular portion of the chain corresponds to 474–504; that stretch reads GACIEGVVLRDKFGEALQGNLVIGMLAWPSP. A helical membrane pass occupies residues 505-531; sequence WVIVIGSFFSTCGAGLQSLTGAPRLLQ. The Cytoplasmic segment spans residues 532–554; sequence AIARDGIVPFLQVFGHGKANGEP. Transmembrane regions (helical) follow at residues 555–571 and 574–598; these read TWAL…GILI and LDSV…ACAV. A chloride-binding site is contributed by tyrosine 589. The Cytoplasmic portion of the chain corresponds to 599–612; it reads QTLLRTPNWRPRFK. A run of 2 helical transmembrane segments spans residues 613–632 and 636–651; these read FYHW…LMFI and YYAL…IYKY. Residues 652–1083 lie on the Cytoplasmic side of the membrane; the sequence is IEYRGAEKEW…GGREVITIYS (432 aa). The segment at 664–680 is scissor helix; it reads GIRGLSLNAARYALLRV. Phosphothreonine is present on residues threonine 973 and threonine 980.

Belongs to the SLC12A transporter family. K/Cl co-transporter subfamily. In terms of assembly, homodimer; adopts a domain-swap conformation at the scissor helices connecting the transmembrane domain and C-terminal domain. Heterodimer with K-Cl cotransporter SLC12A5. As to expression, detected in muscle, brain, lung, heart and kidney.

The protein localises to the cell membrane. The catalysed reaction is K(+)(in) + chloride(in) = K(+)(out) + chloride(out). With respect to regulation, activated by N-ethylmaleimide (NEM). Inhibited by furosemide, DIDS and bumetanide. The inhibition is much stronger in the presence of 50 mM K(+) in the uptake medium. Inhibited by DIOA. Inhibited by WNK3. In terms of biological role, mediates electroneutral potassium-chloride cotransport when activated by cell swelling. May mediate K(+) uptake into Deiters' cells in the cochlea and contribute to K(+) recycling in the inner ear. Important for the survival of cochlear outer and inner hair cells and the maintenance of the organ of Corti. May be required for basolateral Cl(-) extrusion in the kidney and contribute to renal acidification. This Homo sapiens (Human) protein is Solute carrier family 12 member 7.